The chain runs to 542 residues: CTP synthase (542 aa).

An amidoligase domain region spans residues 1–265; sequence MTRYVFITGG…DREILAHFQM (265 aa). CTP is bound at residue Ser13. Ser13 lines the UTP pocket. Residues 14-19 and Asp71 contribute to the ATP site; that span reads SLGKGL. 2 residues coordinate Mg(2+): Asp71 and Glu139. CTP is bound by residues 146-148, 186-191, and Lys222; these read DIE and KTKPTQ. UTP-binding positions include 186–191 and Lys222; that span reads KTKPTQ. Residue 238 to 240 coordinates ATP; it reads RDV. Positions 291 to 541 constitute a Glutamine amidotransferase type-1 domain; that stretch reads TIAIVGKYTG…IAAAIEQSRL (251 aa). Gly353 contributes to the L-glutamine binding site. The Nucleophile; for glutamine hydrolysis role is filled by Cys380. L-glutamine-binding positions include 381-384, Glu404, and Arg469; that span reads FGMQ. Residues His514 and Glu516 contribute to the active site.

This sequence belongs to the CTP synthase family. Homotetramer.

The enzyme catalyses UTP + L-glutamine + ATP + H2O = CTP + L-glutamate + ADP + phosphate + 2 H(+). It carries out the reaction L-glutamine + H2O = L-glutamate + NH4(+). It catalyses the reaction UTP + NH4(+) + ATP = CTP + ADP + phosphate + 2 H(+). It participates in pyrimidine metabolism; CTP biosynthesis via de novo pathway; CTP from UDP: step 2/2. Allosterically activated by GTP, when glutamine is the substrate; GTP has no effect on the reaction when ammonia is the substrate. The allosteric effector GTP functions by stabilizing the protein conformation that binds the tetrahedral intermediate(s) formed during glutamine hydrolysis. Inhibited by the product CTP, via allosteric rather than competitive inhibition. In terms of biological role, catalyzes the ATP-dependent amination of UTP to CTP with either L-glutamine or ammonia as the source of nitrogen. Regulates intracellular CTP levels through interactions with the four ribonucleotide triphosphates. The chain is CTP synthase from Methylorubrum populi (strain ATCC BAA-705 / NCIMB 13946 / BJ001) (Methylobacterium populi).